The following is a 77-amino-acid chain: Acyl carrier protein (77 aa).

Residues 1-76 (MENFDKVKDI…DAVKFINSIE (76 aa)) form the Carrier domain. O-(pantetheine 4'-phosphoryl)serine is present on serine 36.

The protein belongs to the acyl carrier protein (ACP) family. Post-translationally, 4'-phosphopantetheine is transferred from CoA to a specific serine of apo-ACP by AcpS. This modification is essential for activity because fatty acids are bound in thioester linkage to the sulfhydryl of the prosthetic group.

The protein localises to the cytoplasm. Its pathway is lipid metabolism; fatty acid biosynthesis. Carrier of the growing fatty acid chain in fatty acid biosynthesis. In Staphylococcus saprophyticus subsp. saprophyticus (strain ATCC 15305 / DSM 20229 / NCIMB 8711 / NCTC 7292 / S-41), this protein is Acyl carrier protein.